The chain runs to 383 residues: Microtubule-associated protein tau (383 aa).

Over residues 1–27 (MAEPRQEFDVMEDHAGTYGLGDRKDQE) the composition is skewed to basic and acidic residues. The disordered stretch occupies residues 1–198 (MAEPRQEFDV…PVPMPDLKNV (198 aa)). Ala2 is subject to N-acetylalanine. 2 positions are modified to phosphotyrosine: Tyr18 and Tyr29. Residue Lys44 forms a Glycyl lysine isopeptide (Lys-Gly) (interchain with G-Cter in ubiquitin) linkage. At Thr53 the chain carries Phosphothreonine. A compositionally biased stretch (basic and acidic residues) spans 72-91 (KSKDGTGSDDKKAKGADGKT). Phosphothreonine is present on Thr95. Arg97 is modified (omega-N-methylarginine). N6,N6-dimethyllysine; alternate is present on Lys105. The residue at position 105 (Lys105) is an N6-acetyllysine; alternate. Phosphothreonine is present on residues Thr111, Thr117, and Thr123. Positions 116–128 (KTPPAPKTPPSSG) are enriched in pro residues. 3 positions are modified to phosphoserine: Ser127, Ser133, and Ser137. Low complexity predominate over residues 129–156 (EPPKSGDRSGYSSPGSPGTPGSRSRTPS). Tyr139 is modified (phosphotyrosine). A phosphoserine mark is found at Ser140, Ser141, and Ser144. 2 positions are modified to phosphothreonine: Thr147 and Thr154. Position 156 is a phosphoserine (Ser156). Position 159 is a phosphothreonine (Thr159). Lys167 is subject to N6-acetyllysine. Thr173 is subject to Phosphothreonine. Phosphoserine occurs at positions 177 and 179. Tau/MAP repeat units follow at residues 186–216 (QTAP…GGGK), 217–247 (VQII…GGGS), 248–278 (VQIV…GGGQ), and 279–310 (VEVK…GGGN). Residue Lys196 forms a Glycyl lysine isopeptide (Lys-Gly) (interchain with G-Cter in ubiquitin) linkage. The residue at position 201 (Lys201) is an N6-acetyllysine; alternate. Lys201 is subject to N6-methyllysine; alternate. Residue Lys201 forms a Glycyl lysine isopeptide (Lys-Gly) (interchain with G-Cter in ubiquitin); alternate linkage. Ser204 carries the post-translational modification Phosphoserine. Residue Lys209 forms a Glycyl lysine isopeptide (Lys-Gly) (interchain with G-Cter in ubiquitin) linkage. Lys223 carries the post-translational modification N6-acetyllysine; alternate. Residue Lys223 forms a Glycyl lysine isopeptide (Lys-Gly) (interchain with G-Cter in ubiquitin); alternate linkage. Residues Ser227 and Ser231 each carry the phosphoserine modification. N6-acetyllysine is present on Lys232. A disulfide bridge connects residues Cys233 and Cys264. The residue at position 235 (Ser235) is a Phosphoserine. An N6-acetyllysine; alternate modification is found at Lys240. Lys240 is covalently cross-linked (Glycyl lysine isopeptide (Lys-Gly) (interchain with G-Cter in ubiquitin); alternate). Residue Ser247 is modified to Phosphoserine. The residue at position 253 (Lys253) is an N6,N6-dimethyllysine; alternate. Residues Lys253, Lys259, and Lys263 each carry the N6-acetyllysine; alternate modification. Glycyl lysine isopeptide (Lys-Gly) (interchain with G-Cter in ubiquitin); alternate cross-links involve residues Lys253, Lys259, and Lys263. Position 266 is a phosphoserine (Ser266). N6-acetyllysine; alternate occurs at positions 273, 285, and 289. Residues Lys273, Lys285, and Lys289 each participate in a glycyl lysine isopeptide (Lys-Gly) (interchain with G-Cter in ubiquitin); alternate cross-link. The residue at position 291 (Arg291) is an Omega-N-methylarginine. Ser294 bears the Phosphoserine mark. Lys295 participates in a covalent cross-link: Glycyl lysine isopeptide (Lys-Gly) (interchain with G-Cter in ubiquitin). At Ser298 the chain carries Phosphoserine. N6-acetyllysine; alternate is present on Lys311. Residue Lys311 forms a Glycyl lysine isopeptide (Lys-Gly) (interchain with G-Cter in ubiquitin); alternate linkage. Lys317 participates in a covalent cross-link: Glycyl lysine isopeptide (Lys-Gly) (interchain with G-Cter in ubiquitin). An N6-acetyllysine; alternate modification is found at Lys327. Lys327 participates in a covalent cross-link: Glycyl lysine isopeptide (Lys-Gly) (interchain with G-Cter in ubiquitin); alternate. Residue Tyr336 is modified to Phosphotyrosine. 2 positions are modified to phosphoserine: Ser338 and Ser342. The interval 340 to 359 (VVSGDTSPRHLSNVSSTGSI) is disordered. Residues 343 to 358 (GDTSPRHLSNVSSTGS) show a composition bias toward polar residues. Thr345 carries the post-translational modification Phosphothreonine. Residues Ser346, Ser351, Ser358, and Ser364 each carry the phosphoserine modification. The residue at position 369 (Thr369) is a Phosphothreonine.

As to quaternary structure, interacts with MARK1, MARK2, MARK3 and MARK4. Interacts with SQSTM1 when polyubiquitinated. Interacts with PSMC2 through SQSTM1. Interacts with FKBP4. Binds to CSNK1D. Interacts with SGK1. Interacts with PIN1. Interacts with LRRK2. Interacts with LRP1, leading to endocytosis; this interaction is reduced in the presence of LRPAP1/RAP. In terms of processing, polyubiquitinated. Requires functional TRAF6 and may provoke SQSTM1-dependent degradation by the proteasome. Phosphorylation at various serine and threonine residues in S-P or T-P motifs by proline-directed protein kinases (PDPK1, CDK1, CDK5, GSK3, MAPK) (a few sites per protein in interphase, more in mitosis), and at serine residues in K-X-G-S motifs by MAP/microtubule affinity-regulating kinase (MARK1, MARK2, MARK3 or MARK4), causing detachment from microtubules, and their disassembly. Phosphorylation at Ser-204 by BRSK1 and BRSK2 in neurons affects ability to bind microtubules and plays a role in neuron polarization. Phosphorylated by PHK. Dephosphorylation at several serine and threonine residues by the serine/threonine phosphatase PPP5C. As to expression, expressed in neurons.

The protein localises to the cytoplasm. It localises to the cytosol. Its subcellular location is the cell membrane. It is found in the cytoskeleton. The protein resides in the cell projection. The protein localises to the axon. It localises to the dendrite. Its function is as follows. Promotes microtubule assembly and stability, and might be involved in the establishment and maintenance of neuronal polarity. The C-terminus binds axonal microtubules while the N-terminus binds neural plasma membrane components, suggesting that tau functions as a linker protein between both. Axonal polarity is predetermined by tau localization (in the neuronal cell) in the domain of the cell body defined by the centrosome. The sequence is that of Microtubule-associated protein tau (MAPT) from Papio hamadryas (Hamadryas baboon).